The sequence spans 396 residues: NADH-quinone oxidoreductase subunit D (396 aa).

The protein belongs to the complex I 49 kDa subunit family. As to quaternary structure, NDH-1 is composed of 14 different subunits. Subunits NuoB, C, D, E, F, and G constitute the peripheral sector of the complex.

The protein resides in the cell inner membrane. The catalysed reaction is a quinone + NADH + 5 H(+)(in) = a quinol + NAD(+) + 4 H(+)(out). Its function is as follows. NDH-1 shuttles electrons from NADH, via FMN and iron-sulfur (Fe-S) centers, to quinones in the respiratory chain. The immediate electron acceptor for the enzyme in this species is believed to be ubiquinone. Couples the redox reaction to proton translocation (for every two electrons transferred, four hydrogen ions are translocated across the cytoplasmic membrane), and thus conserves the redox energy in a proton gradient. In Bartonella quintana (strain Toulouse) (Rochalimaea quintana), this protein is NADH-quinone oxidoreductase subunit D.